A 155-amino-acid polypeptide reads, in one-letter code: MAASGEGKRRSRARSKLVQALYQYAVTGASAEDIERQFLAAGLGDIDVAYFRELIYGVTDRAAELDEQLSALLDRPLVQLDPVERSILRLGAFELSERLEVPYRVVIDESVELARRFGADQSHRYINGVLDRFGATVALRAAERGERKSRRGDRQ.

This sequence belongs to the NusB family.

Functionally, involved in transcription antitermination. Required for transcription of ribosomal RNA (rRNA) genes. Binds specifically to the boxA antiterminator sequence of the ribosomal RNA (rrn) operons. The sequence is that of Transcription antitermination protein NusB from Halorhodospira halophila (strain DSM 244 / SL1) (Ectothiorhodospira halophila (strain DSM 244 / SL1)).